The chain runs to 114 residues: Ribosome-binding factor A (114 aa).

The protein belongs to the RbfA family. As to quaternary structure, monomer. Binds 30S ribosomal subunits, but not 50S ribosomal subunits or 70S ribosomes.

It is found in the cytoplasm. In terms of biological role, one of several proteins that assist in the late maturation steps of the functional core of the 30S ribosomal subunit. Associates with free 30S ribosomal subunits (but not with 30S subunits that are part of 70S ribosomes or polysomes). Required for efficient processing of 16S rRNA. May interact with the 5'-terminal helix region of 16S rRNA. This is Ribosome-binding factor A from Listeria monocytogenes serotype 4b (strain F2365).